We begin with the raw amino-acid sequence, 68 residues long: U-poneritoxin(01)-Om4a (68 aa).

Residues 1–25 form the signal peptide; the sequence is MKPSSLTLAFLVVFMMAIMYNSVQA. A propeptide spanning residues 26–39 is cleaved from the precursor; sequence EALADADAEAFAEA.

The protein belongs to the formicidae venom precursor-01 superfamily. As to quaternary structure, homo- or heterodimer with PLP7 (AC A0A348G6I9); disulfide-linked. Truncated sequences of this peptide have also been found in the venom. It is possible they have been cleaved in the venom. As to expression, expressed by the venom gland.

It localises to the secreted. Functionally, this homodimer composed of two cationic amphipathic alpha-helical peptides has antimicrobial activities against E.coli (MIC=3.1 uM), S.aureus (MIC=3.1 uM), and S.cerevisiae (MIC=3.1 uM). It also shows histamine-releasing activity (66.4% at 10 uM) and a weak hemolytic activity (10.5% at 50 uM). This chain is U-poneritoxin(01)-Om4a, found in Odontomachus monticola (Trap-jaw ant).